Reading from the N-terminus, the 287-residue chain is Oxaloacetate decarboxylase (287 aa).

Residue serine 50 coordinates substrate. Residue aspartate 88 coordinates Mg(2+). Arginine 159 and histidine 235 together coordinate substrate.

The protein belongs to the isocitrate lyase/PEP mutase superfamily. Oxaloacetate decarboxylase family. Homotetramer; dimer of dimers. Mg(2+) serves as cofactor.

The enzyme catalyses oxaloacetate + H(+) = pyruvate + CO2. Its function is as follows. Catalyzes the decarboxylation of oxaloacetate into pyruvate. Seems to play a role in maintaining cellular concentrations of bicarbonate and pyruvate. The chain is Oxaloacetate decarboxylase from Pseudomonas paraeruginosa (strain DSM 24068 / PA7) (Pseudomonas aeruginosa (strain PA7)).